The chain runs to 472 residues: 3beta,22alpha-dihydroxysteroid 3-dehydrogenase (472 aa).

The chain crosses the membrane as a helical span at residues 1 to 21; that stretch reads MAFTAFLLLLSSIAAGFLLLL. Heme is bound at residue cysteine 418.

It belongs to the cytochrome P450 family. Heme serves as cofactor.

Its subcellular location is the membrane. It carries out the reaction (22S)-22-hydroxycampesterol + reduced [NADPH--hemoprotein reductase] + O2 = (22S)-22-hydroxycampest-4-en-3-one + oxidized [NADPH--hemoprotein reductase] + 2 H2O + H(+). The enzyme catalyses 6-deoxoteasterone + reduced [NADPH--hemoprotein reductase] + O2 = 3-dehydro-6-deoxoteasterone + oxidized [NADPH--hemoprotein reductase] + 2 H2O + H(+). The catalysed reaction is 6-deoxycathasterone + reduced [NADPH--hemoprotein reductase] + O2 = (22S,24R)-22-hydroxy-5alpha-ergostan-3-one + oxidized [NADPH--hemoprotein reductase] + 2 H2O + H(+). It catalyses the reaction (22R,23R)-22,23-dihydroxycampesterol + reduced [NADPH--hemoprotein reductase] + O2 = (22R,23R)-22,23-dihydroxycampest-4-en-3-one + oxidized [NADPH--hemoprotein reductase] + 2 H2O + H(+). Its pathway is plant hormone biosynthesis; brassinosteroid biosynthesis. Functionally, catalyzes C3-oxidation steps in brassinosteroids biosynthesis. Converts (22S)-22-hydroxycampesterol (22-OHCR) to (22S,24R)-22-hydroxyergost-4-en-3-one (22-hydroxy-campesta-4-en-3-one, 22-OH-4-en-3-one), 6-deoxocathasterone (6-deoxoCT) to (22S,24R)-22-hydroxy-5alpha-ergostan-3-one (22-hydroxy-campesta-3-one, 22-OH-3-one), (22R,23R)-22,23-dihydroxycampesterol (22,23-diOHCR) to (22R,23R)-22,23-dihydroxy-campest-4-en-3-one (22,23-diOH-4-en-3-one), and 6-deoxoteasterone (6-deoxoTE) to 3-dehydro-6-deoxoteasterone (6-deoxo3DT, 6-deoxo-3-DHT). The protein is 3beta,22alpha-dihydroxysteroid 3-dehydrogenase of Arabidopsis thaliana (Mouse-ear cress).